Consider the following 459-residue polypeptide: Probable Delta(5) fatty acid desaturase C (459 aa).

The Cytochrome b5 heme-binding domain occupies 9 to 87 (KKLYSWKEIS…LKQYEIGQVS (79 aa)). Positions 45 and 68 each coordinate heme. A run of 2 helical transmembrane segments spans residues 121 to 141 (FAFG…TSYY) and 151 to 171 (FYLN…FSLH). The Histidine box-1 signature appears at 174 to 178 (HDACH). Residues 187–207 (VWKWLGATYDLFIGASFFYWC) form a helical membrane-spanning segment. The Histidine box-2 signature appears at 210-215 (HVIGHH). The next 2 helical transmembrane spans lie at 289–309 (FEII…FIIP) and 315–335 (LVNL…YLSF). The short motif at 394–398 (QVVHH) is the Histidine box-3 element.

It belongs to the fatty acid desaturase type 1 family. The cofactor is Fe cation.

The protein resides in the membrane. This is Probable Delta(5) fatty acid desaturase C from Dictyostelium discoideum (Social amoeba).